The chain runs to 357 residues: NADPH HC-toxin reductase 1 (357 aa).

NADP(+) contacts are provided by residues Arg-40, Lys-47, 68-69 (DL), 88-90 (VAT), Tyr-178, Lys-182, 207-210 (LGLV), and Thr-222. Residue Lys-182 is the Proton donor of the active site.

This sequence belongs to the NAD(P)-dependent epimerase/dehydratase family.

Activity is sensitive to heat, dependent on NADPH, and inhibited by p-hydroxymercuribenzoate and disulfiram. Functionally, in tandem with Hm2, NADPH-dependent Helminthosporium carbonum (HC) toxin reductase (HCTR), which inactivates HC toxin, a cyclic tetrapeptide produced by the fungus Cochliobolus carbonum to permit infection and acting as an inhibitor of host histone deacetylases (HDACs), thus conferring resistance against C.carbonum race 1 in resistant cultivars (e.g. cv. B73 and cv. Wisconsin 22). Catalyzes the production of 8-hydroxy derivative of HC-toxin via the reduction of the 8-keto group of 2-amino-9,10-epoxy-8-oxo-decanoic acid, an amino acid of the HC-toxin. The protein is NADPH HC-toxin reductase 1 of Zea mays (Maize).